Here is a 685-residue protein sequence, read N- to C-terminus: Translation factor GUF1 homolog, mitochondrial (685 aa).

The transit peptide at 1 to 54 directs the protein to the mitochondrion; it reads MFSRLLNRGNGGVNKNITSGLLLRRTTTTTTRLSYINNSPTLSIRSFCSKSTTI. The region spanning 68-267 is the tr-type G domain; it reads DRIRNFSIIA…AVIDRIPPPQ (200 aa). GTP-binding positions include 77–84, 160–164, and 214–217; these read AHIDHGKT, DTPGH, and NKID.

This sequence belongs to the TRAFAC class translation factor GTPase superfamily. Classic translation factor GTPase family. LepA subfamily.

It is found in the mitochondrion inner membrane. The catalysed reaction is GTP + H2O = GDP + phosphate + H(+). Its function is as follows. Promotes mitochondrial protein synthesis. May act as a fidelity factor of the translation reaction, by catalyzing a one-codon backward translocation of tRNAs on improperly translocated ribosomes. Binds to mitochondrial ribosomes in a GTP-dependent manner. The polypeptide is Translation factor GUF1 homolog, mitochondrial (guf1) (Dictyostelium discoideum (Social amoeba)).